An 814-amino-acid chain; its full sequence is Leucine-rich repeat-containing protein 41 (814 aa).

An interaction with Elongin BC complex region spans residues 45-54; it reads ALFELCGRAV. 3 positions are modified to phosphoserine: S155, S276, and S326. A disordered region spans residues 265–408; that stretch reads LCGEASRGRA…KKGARTRQGC (144 aa). Residue T327 is modified to Phosphothreonine. Low complexity predominate over residues 354-385; it reads TKRPPSAPATTSSASASSSTSSSKRAPASSAP. S375 carries the post-translational modification Phosphoserine. Residues 389-403 show a composition bias toward basic residues; it reads PLKRFKRAAGKKGAR. 7 LRR repeats span residues 489-509, 520-532, 533-557, 615-637, 638-661, 703-730, and 733-754; these read WVSL…IFRL, AGCR…LSDL, FSPL…VLSI, SGSL…FGLV, LQTL…LADC, NSTL…VFSE, and SSSL…LLEF.

As to quaternary structure, part of a E3 ubiquitin ligase complex with elongin BC complex (ELOB and ELOC), RBX1 and CUL5.

This is Leucine-rich repeat-containing protein 41 (LRRC41) from Bos taurus (Bovine).